A 748-amino-acid chain; its full sequence is MLGTLRAMEGEDVEDDQLLQKLRASRRRFQRRMQRLIEKYNQPFEDTPVVQMATLTYETPQGLRIWGGRLIKERNEGEIQDSSMKPADRTDGSVQAAAWGPELPSHRTVLGADSKSGEVDATSDQEESVAWALAPAVPQSPLKNELRRKYLTQVDILLQGAEYFECAGNRAGRDVRVTPLPSLASPAVPAPGYCSRISRKSPGDPAKPASSPREWDPLHPSSTDMALVPRNDSLSLQETSSSSFLSSQPFEDDDICNVTISDLYAGMLHSMSRLLSTKPSSIISTKTFIMQNWNSRRRHRYKSRMNKTYCKGARRSQRSSKENFIPCSEPVKGTGALRDCKNVLDVSCRKTGLKLEKAFLEVNRPQIHKLDPSWKERKVTPSKYSSLIYFDSSATYNLDEENRFRTLKWLISPVKIVSRPTIRQGHGENRQREIEIRFDQLHREYCLSPRNQPRRMCLPDSWAMNMYRGGPASPGGLQGLETRRLSLPSSKAKAKSLSEAFENLGKRSLEAGRCLPKSDSSSSLPKTNPTHSATRPQQTSDLHVQGNSSGIFRKSVSPSKTLSVPDKEVPGHGRNRYDEIKEEFDKLHQKYCLKSPGQMTVPLCIGVSTDKASMEVRYQTEGFLGKLNPDPHFQGFQKLPSSPLGCRKSLLGSTAIEAPSSTCVARAITRDGTRDHQFPAKRPRLSEPQGSGRQGNSLGASDGVDNTVRPGDQGSSSQPNSEERGENTSYRMEEKSDFMLEKLETKSV.

A phosphoserine mark is found at Ser123, Ser140, Ser185, Ser201, and Ser211. The segment at 191–226 is disordered; sequence PGYCSRISRKSPGDPAKPASSPREWDPLHPSSTDMA. Lys354 participates in a covalent cross-link: Glycyl lysine isopeptide (Lys-Gly) (interchain with G-Cter in SUMO2). A phosphoserine mark is found at Ser412, Ser448, and Ser473. Phosphoserine; by PKB/AKT1 is present on Ser486. At Ser496 the chain carries Phosphoserine. The interval 512-574 is disordered; the sequence is GRCLPKSDSS…PDKEVPGHGR (63 aa). The segment covering 524–562 has biased composition (polar residues); sequence LPKTNPTHSATRPQQTSDLHVQGNSSGIFRKSVSPSKTL. A compositionally biased stretch (basic and acidic residues) spans 565–574; that stretch reads PDKEVPGHGR. Residues Lys581 and Lys586 each participate in a glycyl lysine isopeptide (Lys-Gly) (interchain with G-Cter in SUMO2) cross-link. Phosphoserine is present on residues Ser595 and Ser642. The tract at residues 670-748 is disordered; that stretch reads RDGTRDHQFP…MLEKLETKSV (79 aa). Residues 688–699 are compositionally biased toward polar residues; it reads PQGSGRQGNSLG. Positions 721–748 are enriched in basic and acidic residues; the sequence is SEERGENTSYRMEEKSDFMLEKLETKSV.

In terms of assembly, interacts with CENPA (via CATD domain); the interaction is direct and specific for CENPA since it does not interact with H3.1- or H3.3-containing nucleosomes. Heterotrimer composed of HJURP, CENPA and histone H4, where HJURP interacts with the dimer formed by CENPA and histone H4 and prevents tetramerization of CENPA and H4. Identified in a centromere complex containing histones H2A, H2B and H4, and at least CENPA, CENPB, CENPC, CENPT, CENPN, HJURP, SUPT16H, SSRP1 and RSF1. Interacts with 14-3-3 family members in a phosphorylation-dependent manner. Interacts with MSH5 and NBN. In terms of tissue distribution, according to PubMed:17256767, highly expressed in the thymus with lower levels in the placenta, small intestine, liver, skeletal muscle, and colon. According to PubMed:17823411, highly expressed in testis, and at a relatively lower level in thymus and bone marrow. Significantly overexpressed in many lung cancer samples, compared with normal lung.

It is found in the nucleus. The protein resides in the nucleolus. Its subcellular location is the chromosome. The protein localises to the centromere. Centromeric protein that plays a central role in the incorporation and maintenance of histone H3-like variant CENPA at centromeres. Acts as a specific chaperone for CENPA and is required for the incorporation of newly synthesized CENPA molecules into nucleosomes at replicated centromeres. Prevents CENPA-H4 tetramerization and prevents premature DNA binding by the CENPA-H4 tetramer. Directly binds Holliday junctions. In Homo sapiens (Human), this protein is Holliday junction recognition protein (HJURP).